The sequence spans 369 residues: Anhydro-N-acetylmuramic acid kinase (369 aa).

Residue 12 to 19 participates in ATP binding; that stretch reads GTSMDGVD.

Belongs to the anhydro-N-acetylmuramic acid kinase family.

The enzyme catalyses 1,6-anhydro-N-acetyl-beta-muramate + ATP + H2O = N-acetyl-D-muramate 6-phosphate + ADP + H(+). It participates in amino-sugar metabolism; 1,6-anhydro-N-acetylmuramate degradation. It functions in the pathway cell wall biogenesis; peptidoglycan recycling. In terms of biological role, catalyzes the specific phosphorylation of 1,6-anhydro-N-acetylmuramic acid (anhMurNAc) with the simultaneous cleavage of the 1,6-anhydro ring, generating MurNAc-6-P. Is required for the utilization of anhMurNAc either imported from the medium or derived from its own cell wall murein, and thus plays a role in cell wall recycling. The chain is Anhydro-N-acetylmuramic acid kinase from Shewanella sp. (strain MR-4).